The sequence spans 181 residues: ATP synthase subunit b, chloroplastic (181 aa).

A helical membrane pass occupies residues 28–50 (IINLSVVLGVLIYFGKGVLSNLL).

It belongs to the ATPase B chain family. In terms of assembly, F-type ATPases have 2 components, F(1) - the catalytic core - and F(0) - the membrane proton channel. F(1) has five subunits: alpha(3), beta(3), gamma(1), delta(1), epsilon(1). F(0) has four main subunits: a(1), b(1), b'(1) and c(10-14). The alpha and beta chains form an alternating ring which encloses part of the gamma chain. F(1) is attached to F(0) by a central stalk formed by the gamma and epsilon chains, while a peripheral stalk is formed by the delta, b and b' chains.

It is found in the plastid. The protein localises to the chloroplast thylakoid membrane. Its function is as follows. F(1)F(0) ATP synthase produces ATP from ADP in the presence of a proton or sodium gradient. F-type ATPases consist of two structural domains, F(1) containing the extramembraneous catalytic core and F(0) containing the membrane proton channel, linked together by a central stalk and a peripheral stalk. During catalysis, ATP synthesis in the catalytic domain of F(1) is coupled via a rotary mechanism of the central stalk subunits to proton translocation. In terms of biological role, component of the F(0) channel, it forms part of the peripheral stalk, linking F(1) to F(0). In Cryptomeria japonica (Japanese cedar), this protein is ATP synthase subunit b, chloroplastic.